Here is a 385-residue protein sequence, read N- to C-terminus: Mannitol-1-phosphate 5-dehydrogenase (385 aa).

Position 3–14 (3–14) interacts with NAD(+); the sequence is ALQFGAGNIGRG.

This sequence belongs to the mannitol dehydrogenase family.

The enzyme catalyses D-mannitol 1-phosphate + NAD(+) = beta-D-fructose 6-phosphate + NADH + H(+). In Buchnera aphidicola subsp. Acyrthosiphon pisum (strain APS) (Acyrthosiphon pisum symbiotic bacterium), this protein is Mannitol-1-phosphate 5-dehydrogenase (mtlD).